A 112-amino-acid chain; its full sequence is Ciliary microtubule inner protein 3 (112 aa).

The tract at residues 1–34 (MCKDSQKPSVPSHGPKTPSCKGVKAPHSSRPRAW) is disordered.

It belongs to the CIMIP3-like family.

It is found in the cytoplasm. The protein resides in the cytoskeleton. The protein localises to the flagellum axoneme. The protein is Ciliary microtubule inner protein 3 of Homo sapiens (Human).